The primary structure comprises 551 residues: Colicin-E6 (551 aa).

Disordered regions lie at residues 1–74 (MSGG…SGGG), 244–269 (LSPGVTNNTDKDVRPAGFTQGGNTRD), 293–317 (PDQVKQRQDEENRRQQEWDATHPVE), 406–501 (NKQA…WYGD), and 517–551 (EGYRASDGQHLGSFEPKTGNQLKGPDPKRNIKKYL). Residues 20-35 (INGGPTGLGVGGGASD) are compositionally biased toward gly residues. The segment covering 36 to 45 (GSGWSSENNP) has biased composition (low complexity). Over residues 46–74 (WGGGSGSGIHWGGGSGHGNGGGNGNSGGG) the composition is skewed to gly residues. Composition is skewed to basic and acidic residues over residues 296 to 317 (VKQRQDEENRRQQEWDATHPVE) and 430 to 484 (ESRK…EGKP). The interval 455-551 (KGVKDYGHDY…DPKRNIKKYL (97 aa)) is ribosome inactivating activity. A binding of immunity protein region spans residues 530-551 (FEPKTGNQLKGPDPKRNIKKYL).

Belongs to the cloacin colicin family.

Its function is as follows. Inactivates ribosomes by hydrolyzing 16S RNA in 30S ribosomes at a specific site. In terms of biological role, colicins are polypeptide toxins produced by and active against E.coli and closely related bacteria. The chain is Colicin-E6 from Escherichia coli.